We begin with the raw amino-acid sequence, 257 residues long: MYSACDVVRDAMAQSHLCACPNDKLPQCKGVTKAPPECSVFHVAKLQDTKFKWKYTLDPLRAQKLDQINKDIEKDAITLRLIYGIELSPEDLEWWKMQRCLINKNTGAKGGQFANKYLERQDLELLGYSPTPLIGGDLMFTALPDKVLRTIPVAWDRFLNPAIMIFFLIILLCVILGIFYVLVRNTLRRKQKNKLHQMEIKRFIKEKEQDPYIHTSFESWPADPNKEWKDLIPVYEAQGYCMADYRKKLGMPPGPNC.

2 helical membrane passes run 123–143 and 163–183; these read LELL…FTAL and IMIF…YVLV.

The protein belongs to the asfivirus C257R family.

It localises to the host membrane. It is found in the virion. In African swine fever virus (isolate Pig/Kenya/KEN-50/1950) (ASFV), this protein is Transmembrane protein C257L.